A 174-amino-acid chain; its full sequence is RNA pyrophosphohydrolase (174 aa).

Residues 6–149 (GYRPNVGIIL…KRDVYERALS (144 aa)) enclose the Nudix hydrolase domain. The Nudix box signature appears at 38–59 (GGIKPGESPEAAMYRELLEEVG).

This sequence belongs to the Nudix hydrolase family. RppH subfamily. The cofactor is a divalent metal cation.

Functionally, accelerates the degradation of transcripts by removing pyrophosphate from the 5'-end of triphosphorylated RNA, leading to a more labile monophosphorylated state that can stimulate subsequent ribonuclease cleavage. This chain is RNA pyrophosphohydrolase, found in Chromobacterium violaceum (strain ATCC 12472 / DSM 30191 / JCM 1249 / CCUG 213 / NBRC 12614 / NCIMB 9131 / NCTC 9757 / MK).